The primary structure comprises 213 residues: Glutathione S-transferase DHAR2 (213 aa).

Cysteine 6 carries the post-translational modification S-glutathionyl cysteine. Positions 8 and 19 each coordinate glutathione. L-ascorbate contacts are provided by lysine 8 and aspartate 19. The region spanning 10–83 is the GST N-terminal domain; it reads AVGAPDVLGD…DVIVGLLEEK (74 aa). Cysteine 20 is modified (S-glutathionyl cysteine). Cysteine 20 (nucleophile) is an active-site residue. The short motif at 20–25 is the Glutathione-binding element; it reads CPFSQR. Glutathione is bound by residues lysine 47, valine 60, serine 73, histidine 160, and tryptophan 207. Residues 84-213 enclose the GST C-terminal domain; it reads YPEPSLKTPP…VAGWESKVNA (130 aa). Lysine 210 is an L-ascorbate binding site.

This sequence belongs to the GST superfamily. DHAR family. In terms of assembly, monomer. In terms of processing, spontaneous S-glutathionylation in the presence of oxidized glutathione (GSSG).

The protein resides in the cytoplasm. Its subcellular location is the cytosol. It catalyses the reaction RX + glutathione = an S-substituted glutathione + a halide anion + H(+). It carries out the reaction L-dehydroascorbate + 2 glutathione = glutathione disulfide + L-ascorbate. Displays a dual function. As a soluble protein, exhibits glutathione-dependent thiol transferase and dehydroascorbate (DHA) reductase activities. Exhibits glutathione-dependent thiol transferase and dehydroascorbate (DHA) reductase activities. Key component of the ascorbate recycling system. Involved in the redox homeostasis, especially in scavenging of ROS under oxidative stresses. Plays a role in ozone tolerance. The chain is Glutathione S-transferase DHAR2 (DHAR2) from Arabidopsis thaliana (Mouse-ear cress).